Reading from the N-terminus, the 157-residue chain is Small ribosomal subunit protein uS7 (157 aa).

This sequence belongs to the universal ribosomal protein uS7 family. Part of the 30S ribosomal subunit. Contacts proteins S9 and S11.

Functionally, one of the primary rRNA binding proteins, it binds directly to 16S rRNA where it nucleates assembly of the head domain of the 30S subunit. Is located at the subunit interface close to the decoding center, probably blocks exit of the E-site tRNA. The polypeptide is Small ribosomal subunit protein uS7 (Leptospira biflexa serovar Patoc (strain Patoc 1 / Ames)).